The sequence spans 57 residues: Large ribosomal subunit protein bL32 (57 aa).

The interval 1-21 (MAVPKRRTSKKVKNQRRTHKK) is disordered.

It belongs to the bacterial ribosomal protein bL32 family.

This Oceanobacillus iheyensis (strain DSM 14371 / CIP 107618 / JCM 11309 / KCTC 3954 / HTE831) protein is Large ribosomal subunit protein bL32.